A 370-amino-acid chain; its full sequence is Alanine racemase (370 aa).

K36 acts as the Proton acceptor; specific for D-alanine in catalysis. An N6-(pyridoxal phosphate)lysine modification is found at K36. R134 provides a ligand contact to substrate. Y265 serves as the catalytic Proton acceptor; specific for L-alanine. M313 contacts substrate.

This sequence belongs to the alanine racemase family. The cofactor is pyridoxal 5'-phosphate.

The enzyme catalyses L-alanine = D-alanine. Its pathway is amino-acid biosynthesis; D-alanine biosynthesis; D-alanine from L-alanine: step 1/1. Catalyzes the interconversion of L-alanine and D-alanine. May also act on other amino acids. This Desulforamulus reducens (strain ATCC BAA-1160 / DSM 100696 / MI-1) (Desulfotomaculum reducens) protein is Alanine racemase (alr).